The primary structure comprises 478 residues: Sulfate adenylyltransferase subunit 1 (478 aa).

Residues 24 to 240 (KSLLRFLTCG…VLENVDIDAD (217 aa)) enclose the tr-type G domain. Positions 33–40 (GSVDDGKS) are G1. Position 33 to 40 (33 to 40 (GSVDDGKS)) interacts with GTP. A G2 region spans residues 91-95 (GITID). The interval 112–115 (DTPG) is G3. GTP is bound by residues 112 to 116 (DTPGH) and 167 to 170 (NKMD). Residues 167-170 (NKMD) form a G4 region. Residues 206 to 208 (SAL) are G5.

The protein belongs to the TRAFAC class translation factor GTPase superfamily. Classic translation factor GTPase family. CysN/NodQ subfamily. As to quaternary structure, heterodimer composed of CysD, the smaller subunit, and CysN.

It carries out the reaction sulfate + ATP + H(+) = adenosine 5'-phosphosulfate + diphosphate. Its pathway is sulfur metabolism; hydrogen sulfide biosynthesis; sulfite from sulfate: step 1/3. Functionally, with CysD forms the ATP sulfurylase (ATPS) that catalyzes the adenylation of sulfate producing adenosine 5'-phosphosulfate (APS) and diphosphate, the first enzymatic step in sulfur assimilation pathway. APS synthesis involves the formation of a high-energy phosphoric-sulfuric acid anhydride bond driven by GTP hydrolysis by CysN coupled to ATP hydrolysis by CysD. The polypeptide is Sulfate adenylyltransferase subunit 1 (Aliivibrio fischeri (strain MJ11) (Vibrio fischeri)).